The primary structure comprises 476 residues: tRNA(Ile)-lysidine synthase (476 aa).

Residue 30-35 participates in ATP binding; that stretch reads SGGPDS.

It belongs to the tRNA(Ile)-lysidine synthase family.

It localises to the cytoplasm. The enzyme catalyses cytidine(34) in tRNA(Ile2) + L-lysine + ATP = lysidine(34) in tRNA(Ile2) + AMP + diphosphate + H(+). Ligates lysine onto the cytidine present at position 34 of the AUA codon-specific tRNA(Ile) that contains the anticodon CAU, in an ATP-dependent manner. Cytidine is converted to lysidine, thus changing the amino acid specificity of the tRNA from methionine to isoleucine. The polypeptide is tRNA(Ile)-lysidine synthase (Bacillus thuringiensis subsp. konkukian (strain 97-27)).